Consider the following 48-residue polypeptide: MVKKVALECSECGRRNYSVPARPNHEERLELKKFCKHCGKVTVHRETR.

The protein belongs to the bacterial ribosomal protein bL33 family.

The protein is Large ribosomal subunit protein bL33A of Limosilactobacillus fermentum (strain NBRC 3956 / LMG 18251) (Lactobacillus fermentum).